The following is a 31-amino-acid chain: Cyclotide vico-A (31 aa).

Positions 1–31 (GSIPCAESCVYIPCFTGIAGCSCKNKVCYYN) form a cross-link, cyclopeptide (Gly-Asn). 3 disulfides stabilise this stretch: Cys-5-Cys-21, Cys-9-Cys-23, and Cys-14-Cys-28.

The protein belongs to the cyclotide family. Bracelet subfamily. In terms of processing, this is a cyclic peptide.

Its function is as follows. Probably participates in a plant defense mechanism. The polypeptide is Cyclotide vico-A (Viola cotyledon (Violeta)).